The chain runs to 512 residues: Polyamine oxidase 1 (512 aa).

FAD is bound by residues Glu-38 and Arg-46. The interval 448 to 470 (DRMAEPLPRGPDAAADERPPSPR) is disordered. Position 476 (Glu-476) interacts with FAD.

The protein belongs to the flavin monoamine oxidase family. FAD serves as cofactor.

Its subcellular location is the cytoplasm. The catalysed reaction is spermine + O2 + H2O = 3-aminopropanal + spermidine + H2O2. The enzyme catalyses N(1)-acetylspermine + O2 + H2O = 3-acetamidopropanal + spermidine + H2O2. It carries out the reaction norspermine + O2 + H2O = norspermidine + 3-aminopropanal + H2O2. It catalyses the reaction thermospermine + O2 + H2O = 3-aminopropanal + spermidine + H2O2. Its pathway is amine and polyamine degradation; spermine degradation. Functionally, flavoenzyme involved in polyamine back-conversion. Catalyzes the oxidation of the secondary amino group of polyamines, such as spermine and its acetyl derivatives. Substrate preference is thermospermine &gt; spermine &gt; norspermine &gt; N(1)-acetylspermine. No activity detected when putrescine or spermidine are used as substrates. Plays an important role in the regulation of polyamine intracellular concentration. The protein is Polyamine oxidase 1 of Oryza sativa subsp. japonica (Rice).